We begin with the raw amino-acid sequence, 945 residues long: Valine--tRNA ligase (945 aa).

The short motif at 42–52 is the 'HIGH' region element; sequence PNVTGTLHMGH. The short motif at 552–556 is the 'KMSKS' region element; that stretch reads KMSKS. Lys555 provides a ligand contact to ATP. The stretch at 879-945 forms a coiled coil; that stretch reads DKAAETARLS…VQNQLAKLKD (67 aa).

Belongs to the class-I aminoacyl-tRNA synthetase family. ValS type 1 subfamily. As to quaternary structure, monomer.

The protein localises to the cytoplasm. It carries out the reaction tRNA(Val) + L-valine + ATP = L-valyl-tRNA(Val) + AMP + diphosphate. Its function is as follows. Catalyzes the attachment of valine to tRNA(Val). As ValRS can inadvertently accommodate and process structurally similar amino acids such as threonine, to avoid such errors, it has a 'posttransfer' editing activity that hydrolyzes mischarged Thr-tRNA(Val) in a tRNA-dependent manner. The sequence is that of Valine--tRNA ligase from Neisseria gonorrhoeae (strain ATCC 700825 / FA 1090).